We begin with the raw amino-acid sequence, 507 residues long: Histidine ammonia-lyase (507 aa).

The 5-imidazolinone (Ala-Gly) cross-link spans 141–143; the sequence is ASG. Ser-142 bears the 2,3-didehydroalanine (Ser) mark.

The protein belongs to the PAL/histidase family. In terms of processing, contains an active site 4-methylidene-imidazol-5-one (MIO), which is formed autocatalytically by cyclization and dehydration of residues Ala-Ser-Gly.

Its subcellular location is the cytoplasm. The catalysed reaction is L-histidine = trans-urocanate + NH4(+). It functions in the pathway amino-acid degradation; L-histidine degradation into L-glutamate; N-formimidoyl-L-glutamate from L-histidine: step 1/3. The chain is Histidine ammonia-lyase from Cereibacter sphaeroides (strain KD131 / KCTC 12085) (Rhodobacter sphaeroides).